Consider the following 263-residue polypeptide: MQSIYLAKIREQNPLIHNITNIVAANFSANGLLALGASPLMSANVEEMQEVPKISQALVINIGTLIGKDREAMLQAGKTANEVGIPVVLDPVGVGATSYRRETVRQLLAEVKFTLIRGNAGELAAIAGEAWQAKGVDAGKGEVDLKAVAEKVAQRYGCTALISGAVDIVSDGTQTATIHNGTPLFPKVTASGCLLSAVCAAFLAVSEGNYFSATLEACVAYTIAGERAAQSLTTQVGQFQIRLLDELAALSPETIRQRGRINE.

Residue Met-41 coordinates substrate. The ATP site is built by Arg-117 and Ser-163. Residue Ala-190 coordinates substrate.

The protein belongs to the Thz kinase family. Mg(2+) serves as cofactor.

It carries out the reaction 5-(2-hydroxyethyl)-4-methylthiazole + ATP = 4-methyl-5-(2-phosphooxyethyl)-thiazole + ADP + H(+). Its pathway is cofactor biosynthesis; thiamine diphosphate biosynthesis; 4-methyl-5-(2-phosphoethyl)-thiazole from 5-(2-hydroxyethyl)-4-methylthiazole: step 1/1. Catalyzes the phosphorylation of the hydroxyl group of 4-methyl-5-beta-hydroxyethylthiazole (THZ). The polypeptide is Hydroxyethylthiazole kinase (Haemophilus influenzae (strain PittEE)).